Consider the following 460-residue polypeptide: Cysteine--tRNA ligase (460 aa).

Zn(2+) is bound at residue cysteine 28. The 'HIGH' region motif lies at 30–40; the sequence is MTVYDYCHLGH. Cysteine 209, histidine 234, and glutamate 238 together coordinate Zn(2+). The 'KMSKS' region motif lies at 266–270; it reads KMSKS. Lysine 269 contributes to the ATP binding site.

The protein belongs to the class-I aminoacyl-tRNA synthetase family. As to quaternary structure, monomer. It depends on Zn(2+) as a cofactor.

The protein resides in the cytoplasm. The catalysed reaction is tRNA(Cys) + L-cysteine + ATP = L-cysteinyl-tRNA(Cys) + AMP + diphosphate. In Pseudomonas putida (strain GB-1), this protein is Cysteine--tRNA ligase.